The following is a 442-amino-acid chain: MSKKEKPHMNLIVIGHVDHGKSTLVGHLLYELGFVDEKTLKMLEEEAKKRGKESFKYAWLLDKLKEERERGVTIDLTFMKFETPKYYFTIIDAPGHRDFIKNMITGASQADAAILVVSARPGEFEAGMSAEGQTREHILLAKTMGIDQIIVAVNKMDATEPPWSEKRYKQIVETLKKFMKGLGFKVDEIPFVPVSAWTGDNIIKRSENMPWYKGPTLVEALDNLKPPSVEKWAKLPLRIPIQDVYSITGVGTVPVGRVETGVLKVGDKVVFMPPGVGGEVRSIEMHHEKIEQAMPGDNIGFNVRGVSKNDIKRGDVAGHPENPPTVADQFTARVFVIWHPSAIAVGYTPVIHAHTASVASRIIEIKQKIDPRTGKVIEENPSFLKPGDAAVVVFKPLKPMVIEKFQEFQPLGRFAMRDMGKTVGIGIVTDVKPAKVEIKMKK.

The tr-type G domain occupies 6–229 (KPHMNLIVIG…ALDNLKPPSV (224 aa)). The tract at residues 15-22 (GHVDHGKS) is G1. 15–22 (GHVDHGKS) is a binding site for GTP. Ser-22 contributes to the Mg(2+) binding site. Positions 71-75 (GVTID) are G2. Residues 92–95 (DAPG) are G3. GTP-binding positions include 92 to 96 (DAPGH) and 154 to 157 (NKMD). The G4 stretch occupies residues 154 to 157 (NKMD). The interval 195–197 (SAW) is G5.

It belongs to the TRAFAC class translation factor GTPase superfamily. Classic translation factor GTPase family. EF-Tu/EF-1A subfamily.

It localises to the cytoplasm. The catalysed reaction is GTP + H2O = GDP + phosphate + H(+). GTP hydrolase that promotes the GTP-dependent binding of aminoacyl-tRNA to the A-site of ribosomes during protein biosynthesis. The sequence is that of Elongation factor 1-alpha from Ignicoccus hospitalis (strain KIN4/I / DSM 18386 / JCM 14125).